A 345-amino-acid polypeptide reads, in one-letter code: Meiotically up-regulated gene 97 protein (345 aa).

The next 2 helical transmembrane spans lie at 292–312 (MWVLSLLLFSAGGSVLIGLWM) and 319–329 (FAHGMLLNLGI).

Its subcellular location is the membrane. Functionally, required for correct meiotic chromosome segregation. Appears to also have role in sporulation. In Schizosaccharomyces pombe (strain 972 / ATCC 24843) (Fission yeast), this protein is Meiotically up-regulated gene 97 protein (mug97).